A 226-amino-acid chain; its full sequence is NAD(P)H-hydrate epimerase (226 aa).

The YjeF N-terminal domain maps to 10–215; that stretch reads AIELDLDLFE…ALQRKYQLNL (206 aa). 58-62 serves as a coordination point for (6S)-NADPHX; the sequence is NNGGD. K(+) is bound by residues Asn59 and Asp123. (6S)-NADPHX-binding positions include 127–133 and Asp156; that span reads GFGFKPP. Ser159 contacts K(+).

It belongs to the NnrE/AIBP family. Requires K(+) as cofactor.

The catalysed reaction is (6R)-NADHX = (6S)-NADHX. It carries out the reaction (6R)-NADPHX = (6S)-NADPHX. Catalyzes the epimerization of the S- and R-forms of NAD(P)HX, a damaged form of NAD(P)H that is a result of enzymatic or heat-dependent hydration. This is a prerequisite for the S-specific NAD(P)H-hydrate dehydratase to allow the repair of both epimers of NAD(P)HX. This is NAD(P)H-hydrate epimerase from Drosophila pseudoobscura pseudoobscura (Fruit fly).